The sequence spans 227 residues: Cytochrome c oxidase subunit 2 (227 aa).

Residues 1–14 (MAYPLQLGLQDATS) are Mitochondrial intermembrane-facing. The chain crosses the membrane as a helical span at residues 15–45 (PIMEELMNFHDHTLMIVFLISSLVLYVISSM). Residues 46 to 59 (LTTKLTHTSTMDAQ) are Mitochondrial matrix-facing. The chain crosses the membrane as a helical span at residues 60–87 (EVETIWTILPAVILIMIALPSLRILYMM). The Mitochondrial intermembrane portion of the chain corresponds to 88-227 (DEINNPVLTV…NFETWSVSMI (140 aa)). Histidine 161, cysteine 196, glutamate 198, cysteine 200, histidine 204, and methionine 207 together coordinate Cu cation. A Mg(2+)-binding site is contributed by glutamate 198.

Belongs to the cytochrome c oxidase subunit 2 family. Component of the cytochrome c oxidase (complex IV, CIV), a multisubunit enzyme composed of 14 subunits. The complex is composed of a catalytic core of 3 subunits MT-CO1, MT-CO2 and MT-CO3, encoded in the mitochondrial DNA, and 11 supernumerary subunits COX4I, COX5A, COX5B, COX6A, COX6B, COX6C, COX7A, COX7B, COX7C, COX8 and NDUFA4, which are encoded in the nuclear genome. The complex exists as a monomer or a dimer and forms supercomplexes (SCs) in the inner mitochondrial membrane with NADH-ubiquinone oxidoreductase (complex I, CI) and ubiquinol-cytochrome c oxidoreductase (cytochrome b-c1 complex, complex III, CIII), resulting in different assemblies (supercomplex SCI(1)III(2)IV(1) and megacomplex MCI(2)III(2)IV(2)). Found in a complex with TMEM177, COA6, COX18, COX20, SCO1 and SCO2. Interacts with TMEM177 in a COX20-dependent manner. Interacts with COX20. Interacts with COX16. Cu cation serves as cofactor.

The protein localises to the mitochondrion inner membrane. It carries out the reaction 4 Fe(II)-[cytochrome c] + O2 + 8 H(+)(in) = 4 Fe(III)-[cytochrome c] + 2 H2O + 4 H(+)(out). Functionally, component of the cytochrome c oxidase, the last enzyme in the mitochondrial electron transport chain which drives oxidative phosphorylation. The respiratory chain contains 3 multisubunit complexes succinate dehydrogenase (complex II, CII), ubiquinol-cytochrome c oxidoreductase (cytochrome b-c1 complex, complex III, CIII) and cytochrome c oxidase (complex IV, CIV), that cooperate to transfer electrons derived from NADH and succinate to molecular oxygen, creating an electrochemical gradient over the inner membrane that drives transmembrane transport and the ATP synthase. Cytochrome c oxidase is the component of the respiratory chain that catalyzes the reduction of oxygen to water. Electrons originating from reduced cytochrome c in the intermembrane space (IMS) are transferred via the dinuclear copper A center (CU(A)) of subunit 2 and heme A of subunit 1 to the active site in subunit 1, a binuclear center (BNC) formed by heme A3 and copper B (CU(B)). The BNC reduces molecular oxygen to 2 water molecules using 4 electrons from cytochrome c in the IMS and 4 protons from the mitochondrial matrix. The protein is Cytochrome c oxidase subunit 2 (MT-CO2) of Malacothrix typica (Long-eared mouse).